A 227-amino-acid polypeptide reads, in one-letter code: N-acetyltransferase 8B (227 aa).

The Cytoplasmic segment spans residues Met1–Thr42. The chain crosses the membrane as a helical; Signal-anchor for type II membrane protein span at residues Leu43 to Ala63. Residues Ile61–His214 enclose the N-acetyltransferase domain. The Lumenal portion of the chain corresponds to Leu64–Leu227. Lys99 carries the post-translational modification N6-acetyllysine.

This sequence belongs to the NAT8 family. Acetylation on Lys-99 modulates enzymatic activity.

Its subcellular location is the endoplasmic reticulum-Golgi intermediate compartment membrane. It localises to the endoplasmic reticulum membrane. The enzyme catalyses L-lysyl-[protein] + acetyl-CoA = N(6)-acetyl-L-lysyl-[protein] + CoA + H(+). With respect to regulation, allosterically regulated by acetylation at residue Lys-99. Its function is as follows. Endoplasmic reticulum (ER)-membrane-bound lysine N-acetyltransferase catalyzing the N6-acetylation of lysine residues in the lumen of the ER in various proteins, including PROM1 and BACE1, using acetyl-CoA as acetyl donor. Thereby, may regulate apoptosis through the acetylation and the regulation of the expression of PROM1. Acetylates and stabilizes BACE1 immature protein, leading to increased steady-state levels in neurons. By acting on BACE1 expression, may regulate amyloid beta-peptide formation. N(6)-lysine acetylation in ER maintains protein homeostasis and regulates reticulophagy. In Homo sapiens (Human), this protein is N-acetyltransferase 8B.